The chain runs to 483 residues: Type 2 glycosyltransferase (483 aa).

Residues 21 to 41 (AVVYLSALFTPWFTAFCVLWL) traverse the membrane as a helical segment. The Dxd motif signature appears at 156–158 (DDD). A QxxxRW motif motif is present at residues 301 to 305 (QCSRW). Residue Asn-313 is glycosylated (N-linked (GlcNAc...) asparagine). 3 consecutive transmembrane segments (helical) span residues 336–356 (IATFTSLAFVFDFLILAALWW), 369–389 (AIYAQLAFLAFSKVVKLVGLF), and 396–416 (IMFLPVSIIFGYFHGLIKIYA). N-linked (GlcNAc...) asparagine glycosylation occurs at Asn-421.

It belongs to the GT2 glycosyltransferase family.

The protein localises to the cell membrane. In terms of biological role, glycosyltransferase that plays an important role in infection-related morphogenesis and pathogenesis. Involved in stress tolerance and hyphal hydrophobicity via its regulation of the expression of nydrophobin MPG1. May regulate growth, pathogenicity, and cell wall integrity (CWI) through glycosylation of heat shock protein SSB1, and other (unidentified) substrates may contribute to conidiation. Candidate proteins as potential substrates of GT2 include several heat shock proteins (SSB1/MGG_02503, MGG_06759 and MGG_06958), two coiled-coil domain-containing proteins (MGG_04321 and MGG_09571), aminopeptidase 2 (MGG_16472), and a nuclease domain-containing protein (MGG_12646). This is Type 2 glycosyltransferase from Pyricularia oryzae (strain 70-15 / ATCC MYA-4617 / FGSC 8958) (Rice blast fungus).